A 173-amino-acid polypeptide reads, in one-letter code: Shikimate kinase (173 aa).

Residue 14 to 19 (GAGKST) coordinates ATP. Residue Ser-18 coordinates Mg(2+). 3 residues coordinate substrate: Asp-36, Arg-60, and Gly-82. Arg-120 contacts ATP. Arg-140 is a binding site for substrate. Gln-157 provides a ligand contact to ATP.

It belongs to the shikimate kinase family. In terms of assembly, monomer. Requires Mg(2+) as cofactor.

It localises to the cytoplasm. The catalysed reaction is shikimate + ATP = 3-phosphoshikimate + ADP + H(+). The protein operates within metabolic intermediate biosynthesis; chorismate biosynthesis; chorismate from D-erythrose 4-phosphate and phosphoenolpyruvate: step 5/7. Functionally, catalyzes the specific phosphorylation of the 3-hydroxyl group of shikimic acid using ATP as a cosubstrate. In Buchnera aphidicola subsp. Schizaphis graminum (strain Sg), this protein is Shikimate kinase.